Reading from the N-terminus, the 301-residue chain is tRNA dimethylallyltransferase 1 (301 aa).

10 to 17 contributes to the ATP binding site; the sequence is GPTASGKT. A substrate-binding site is contributed by 12–17; the sequence is TASGKT. Residues 35 to 38 are interaction with substrate tRNA; it reads DSRQ.

It belongs to the IPP transferase family. Monomer. It depends on Mg(2+) as a cofactor.

The catalysed reaction is adenosine(37) in tRNA + dimethylallyl diphosphate = N(6)-dimethylallyladenosine(37) in tRNA + diphosphate. Catalyzes the transfer of a dimethylallyl group onto the adenine at position 37 in tRNAs that read codons beginning with uridine, leading to the formation of N6-(dimethylallyl)adenosine (i(6)A). The sequence is that of tRNA dimethylallyltransferase 1 from Geotalea uraniireducens (strain Rf4) (Geobacter uraniireducens).